A 351-amino-acid polypeptide reads, in one-letter code: MKNMPENHNPQANAWTAEFPPEMSYVVFAQIGIQSKSLDHAAEHLGMMKKSFDLRTGPKHVDRALHQGADGYQDSIFLAYWDEPETFKSWVADPEVQKWWSGKKIDENSPIGYWSEVTTIPIDHFETLHSGENYDNGVSHFVPIKHTEVHEYWGAMRDRMPVSASSDLESPLGLQLPEPIVRESFGKRLKVTAPDNICLIRTAQNWSKCGSGERETYIGLVEPTLIKANTFLRENASETGCISSKLVYEQTHDGEIVDKSCVIGYYLSMGHLERWTHDHPTHKAIYGTFYEMLKRHDFKTELALWHEVSVLQSKDIELIYVNCHPSTGFLPFFEVTEIQEPLLKSPSVRIQ.

This sequence belongs to the heme-containing dehydratase family. Monomer. Heme b serves as cofactor.

The enzyme catalyses (Z)-phenylacetaldehyde oxime = phenylacetonitrile + H2O. In terms of biological role, catalyzes the stoichiometric dehydration of Z-phenylacetaldoxime to phenylacetonitrile. Prefers the Z-form of phenylacetaldoxime over its E-isomer. The chain is Phenylacetaldoxime dehydratase from Bacillus sp. (strain OxB-1).